The chain runs to 160 residues: 6,7-dimethyl-8-ribityllumazine synthase (160 aa).

5-amino-6-(D-ribitylamino)uracil contacts are provided by residues Trp28, 59–61 (SFE), and 82–84 (VII). 87-88 (GT) is a (2S)-2-hydroxy-3-oxobutyl phosphate binding site. His90 serves as the catalytic Proton donor. Position 115 (Phe115) interacts with 5-amino-6-(D-ribitylamino)uracil. Arg129 lines the (2S)-2-hydroxy-3-oxobutyl phosphate pocket.

The protein belongs to the DMRL synthase family.

The enzyme catalyses (2S)-2-hydroxy-3-oxobutyl phosphate + 5-amino-6-(D-ribitylamino)uracil = 6,7-dimethyl-8-(1-D-ribityl)lumazine + phosphate + 2 H2O + H(+). The protein operates within cofactor biosynthesis; riboflavin biosynthesis; riboflavin from 2-hydroxy-3-oxobutyl phosphate and 5-amino-6-(D-ribitylamino)uracil: step 1/2. Functionally, catalyzes the formation of 6,7-dimethyl-8-ribityllumazine by condensation of 5-amino-6-(D-ribitylamino)uracil with 3,4-dihydroxy-2-butanone 4-phosphate. This is the penultimate step in the biosynthesis of riboflavin. This is 6,7-dimethyl-8-ribityllumazine synthase from Clavibacter sepedonicus (Clavibacter michiganensis subsp. sepedonicus).